The primary structure comprises 836 residues: RNA-binding protein 12B-A (836 aa).

One can recognise an RRM 1 domain in the interval 154-229; sequence PYLFLRGLPY…RFIEVMQGSE (76 aa). Residues 237-277 are disordered; that stretch reads GTATEGGDTPRMRSEEHSPSRRINGRHFRKRSHSKSPRARS. Positions 244 to 255 are enriched in basic and acidic residues; that stretch reads DTPRMRSEEHSP. Residues 259 to 277 are compositionally biased toward basic residues; it reads INGRHFRKRSHSKSPRARS. RRM domains are found at residues 283–359 and 401–478; these read FYVH…PVSR and LCIY…LISE. 2 disordered regions span residues 539–572 and 620–644; these read GHFK…PWEE and SQEH…RRSR. Residues 550–572 are compositionally biased toward basic and acidic residues; the sequence is QSDRRSPEDFRHSPEDYRHPWEE. At S703 the chain carries Phosphoserine. At K758 the chain carries N6-acetyllysine. The 77-residue stretch at 760–836 folds into the RRM 4 domain; sequence IPVKISNLPF…GPRKVKLSLL (77 aa).

In Mus musculus (Mouse), this protein is RNA-binding protein 12B-A (Rbm12b1).